A 672-amino-acid chain; its full sequence is DNA ligase (672 aa).

NAD(+) is bound by residues 30–34, 79–80, and Glu-110; these read DAVYD and SL. Lys-112 acts as the N6-AMP-lysine intermediate in catalysis. Residues Arg-133, Glu-170, Lys-287, and Lys-311 each coordinate NAD(+). Residues Cys-405, Cys-408, Cys-423, and Cys-429 each contribute to the Zn(2+) site. One can recognise a BRCT domain in the interval 590-672; that stretch reads ADELPLSGKT…IALLTEHGAI (83 aa).

This sequence belongs to the NAD-dependent DNA ligase family. LigA subfamily. Requires Mg(2+) as cofactor. It depends on Mn(2+) as a cofactor.

The catalysed reaction is NAD(+) + (deoxyribonucleotide)n-3'-hydroxyl + 5'-phospho-(deoxyribonucleotide)m = (deoxyribonucleotide)n+m + AMP + beta-nicotinamide D-nucleotide.. In terms of biological role, DNA ligase that catalyzes the formation of phosphodiester linkages between 5'-phosphoryl and 3'-hydroxyl groups in double-stranded DNA using NAD as a coenzyme and as the energy source for the reaction. It is essential for DNA replication and repair of damaged DNA. This chain is DNA ligase, found in Marinomonas sp. (strain MWYL1).